The following is a 92-amino-acid chain: Small ribosomal subunit protein uS19c (92 aa).

The protein belongs to the universal ribosomal protein uS19 family.

It is found in the plastid. Its subcellular location is the chloroplast. Functionally, protein S19 forms a complex with S13 that binds strongly to the 16S ribosomal RNA. In Rhodomonas salina (Cryptomonas salina), this protein is Small ribosomal subunit protein uS19c.